Reading from the N-terminus, the 308-residue chain is Dihydroorotate dehydrogenase A (fumarate) (308 aa).

Residues serine 24 and 48-49 (KS) each bind FMN. Substrate-binding positions include lysine 48, 72–76 (NANGL), and asparagine 132. Asparagine 132 is an FMN binding site. The active-site Nucleophile is the cysteine 135. Residues lysine 171 and isoleucine 197 each coordinate FMN. Position 198-199 (198-199 (NT)) interacts with substrate. Residues glycine 223 and 249–250 (GG) each bind FMN.

Belongs to the dihydroorotate dehydrogenase family. Type 1 subfamily. As to quaternary structure, homodimer. It depends on FMN as a cofactor.

The protein resides in the cytoplasm. It catalyses the reaction (S)-dihydroorotate + fumarate = orotate + succinate. Its pathway is pyrimidine metabolism; UMP biosynthesis via de novo pathway. Its function is as follows. Catalyzes the conversion of dihydroorotate to orotate with fumarate as the electron acceptor. The sequence is that of Dihydroorotate dehydrogenase A (fumarate) (pyrD) from Limosilactobacillus reuteri (strain DSM 20016) (Lactobacillus reuteri).